The following is a 134-amino-acid chain: Small ribosomal subunit protein uS8c (134 aa).

As to quaternary structure, component of the chloroplast small ribosomal subunit (SSU). Mature 70S chloroplast ribosomes of higher plants consist of a small (30S) and a large (50S) subunit. The 30S small subunit contains 1 molecule of ribosomal RNA (16S rRNA) and 24 different proteins. The 50S large subunit contains 3 rRNA molecules (23S, 5S and 4.5S rRNA) and 33 different proteins.

It localises to the plastid. The protein resides in the chloroplast. Its function is as follows. Component of the chloroplast ribosome (chloro-ribosome), a dedicated translation machinery responsible for the synthesis of chloroplast genome-encoded proteins, including proteins of the transcription and translation machinery and components of the photosynthetic apparatus. The chain is Small ribosomal subunit protein uS8c (rps8) from Spinacia oleracea (Spinach).